A 179-amino-acid chain; its full sequence is ATP synthase subunit delta (179 aa).

The protein belongs to the ATPase delta chain family. As to quaternary structure, F-type ATPases have 2 components, F(1) - the catalytic core - and F(0) - the membrane proton channel. F(1) has five subunits: alpha(3), beta(3), gamma(1), delta(1), epsilon(1). F(0) has three main subunits: a(1), b(2) and c(10-14). The alpha and beta chains form an alternating ring which encloses part of the gamma chain. F(1) is attached to F(0) by a central stalk formed by the gamma and epsilon chains, while a peripheral stalk is formed by the delta and b chains.

Its subcellular location is the cell membrane. Functionally, f(1)F(0) ATP synthase produces ATP from ADP in the presence of a proton or sodium gradient. F-type ATPases consist of two structural domains, F(1) containing the extramembraneous catalytic core and F(0) containing the membrane proton channel, linked together by a central stalk and a peripheral stalk. During catalysis, ATP synthesis in the catalytic domain of F(1) is coupled via a rotary mechanism of the central stalk subunits to proton translocation. In terms of biological role, this protein is part of the stalk that links CF(0) to CF(1). It either transmits conformational changes from CF(0) to CF(1) or is implicated in proton conduction. This chain is ATP synthase subunit delta, found in Metamycoplasma arthritidis (strain 158L3-1) (Mycoplasma arthritidis).